We begin with the raw amino-acid sequence, 349 residues long: Fructose-bisphosphate aldolase 2, chloroplastic (349 aa).

Substrate contacts are provided by Arg47 and Lys137. Glu177 functions as the Proton acceptor in the catalytic mechanism. The active-site Schiff-base intermediate with dihydroxyacetone-P is the Lys219.

It belongs to the class I fructose-bisphosphate aldolase family.

The protein localises to the plastid. The protein resides in the chloroplast. It carries out the reaction beta-D-fructose 1,6-bisphosphate = D-glyceraldehyde 3-phosphate + dihydroxyacetone phosphate. Its pathway is carbohydrate degradation; glycolysis; D-glyceraldehyde 3-phosphate and glycerone phosphate from D-glucose: step 4/4. The chain is Fructose-bisphosphate aldolase 2, chloroplastic from Pisum sativum (Garden pea).